A 308-amino-acid chain; its full sequence is Oxygen-dependent coproporphyrinogen-III oxidase (308 aa).

Position 100 (Ser-100) interacts with substrate. His-104 and His-114 together coordinate a divalent metal cation. The active-site Proton donor is the His-114. 116–118 (NFR) contributes to the substrate binding site. A divalent metal cation contacts are provided by His-153 and His-183. The important for dimerization stretch occupies residues 248–283 (YVEFNLVFDRGTIFGLQSGGRTESILSSMPPIATWK). 266–268 (GGR) contributes to the substrate binding site.

It belongs to the aerobic coproporphyrinogen-III oxidase family. In terms of assembly, homodimer. A divalent metal cation is required as a cofactor.

Its subcellular location is the cytoplasm. It carries out the reaction coproporphyrinogen III + O2 + 2 H(+) = protoporphyrinogen IX + 2 CO2 + 2 H2O. Its pathway is porphyrin-containing compound metabolism; protoporphyrin-IX biosynthesis; protoporphyrinogen-IX from coproporphyrinogen-III (O2 route): step 1/1. Its function is as follows. Involved in the heme biosynthesis. Catalyzes the aerobic oxidative decarboxylation of propionate groups of rings A and B of coproporphyrinogen-III to yield the vinyl groups in protoporphyrinogen-IX. The protein is Oxygen-dependent coproporphyrinogen-III oxidase of Francisella tularensis subsp. tularensis (strain FSC 198).